Here is a 769-residue protein sequence, read N- to C-terminus: Glutathione biosynthesis bifunctional protein GshAB (769 aa).

The segment at 1 to 347 is glutamate--cysteine ligase; that stretch reads MLDSFKENEA…QLADENENNI (347 aa). The 255-residue stretch at 514–768 folds into the ATP-grasp domain; sequence KLVLAEHGIR…IGDKILDFLF (255 aa). An ATP-binding site is contributed by 541 to 599; that stretch reads SLFEDKQIVVKPKSTNYGWGISIFKNKFTLEDYQEALNIAFSYDSSVIIEEFIPGDEFR. Mg(2+)-binding residues include Asp-721, Glu-738, and Asn-740. Residues Asp-721, Glu-738, and Asn-740 each contribute to the Mn(2+) site.

In the N-terminal section; belongs to the glutamate--cysteine ligase type 1 family. Type 2 subfamily. In terms of assembly, monomer. Requires Mg(2+) as cofactor. Mn(2+) serves as cofactor.

It catalyses the reaction L-cysteine + L-glutamate + ATP = gamma-L-glutamyl-L-cysteine + ADP + phosphate + H(+). The enzyme catalyses gamma-L-glutamyl-L-cysteine + glycine + ATP = glutathione + ADP + phosphate + H(+). The protein operates within sulfur metabolism; glutathione biosynthesis; glutathione from L-cysteine and L-glutamate: step 1/2. It functions in the pathway sulfur metabolism; glutathione biosynthesis; glutathione from L-cysteine and L-glutamate: step 2/2. In terms of biological role, synthesizes glutathione from L-glutamate and L-cysteine via gamma-L-glutamyl-L-cysteine. The polypeptide is Glutathione biosynthesis bifunctional protein GshAB (Listeria innocua serovar 6a (strain ATCC BAA-680 / CLIP 11262)).